The chain runs to 116 residues: Small ribosomal subunit protein uS13m (116 aa).

This sequence belongs to the universal ribosomal protein uS13 family. As to quaternary structure, part of the small ribosomal subunit.

The protein localises to the mitochondrion. Functionally, located at the top of the head of the small subunit, it contacts several helices of the 18S rRNA. The chain is Small ribosomal subunit protein uS13m (RPS13) from Nicotiana tabacum (Common tobacco).